The sequence spans 539 residues: Chaperonin GroEL 1 (539 aa).

ATP contacts are provided by residues 29 to 32 (TLGP), 86 to 90 (DGTTT), Gly413, and Asp495.

The protein belongs to the chaperonin (HSP60) family. In terms of assembly, forms a cylinder of 14 subunits composed of two heptameric rings stacked back-to-back. Interacts with the co-chaperonin GroES.

The protein resides in the cytoplasm. It catalyses the reaction ATP + H2O + a folded polypeptide = ADP + phosphate + an unfolded polypeptide.. Its function is as follows. Together with its co-chaperonin GroES, plays an essential role in assisting protein folding. The GroEL-GroES system forms a nano-cage that allows encapsulation of the non-native substrate proteins and provides a physical environment optimized to promote and accelerate protein folding. The protein is Chaperonin GroEL 1 of Mycobacterium bovis (strain ATCC BAA-935 / AF2122/97).